Reading from the N-terminus, the 99-residue chain is Large ribosomal subunit protein eL21 (99 aa).

It belongs to the eukaryotic ribosomal protein eL21 family.

The protein is Large ribosomal subunit protein eL21 of Methanocella arvoryzae (strain DSM 22066 / NBRC 105507 / MRE50).